Consider the following 498-residue polypeptide: Cytochrome P450 monooxygenase ltmP (498 aa).

The N-terminal stretch at 1–21 (MLMLHAVPVGICLLLWYVVYG) is a signal peptide. An N-linked (GlcNAc...) asparagine glycan is attached at Asn420. Position 435 (Cys435) interacts with heme.

This sequence belongs to the cytochrome P450 family. It depends on heme as a cofactor.

It participates in secondary metabolite biosynthesis. Functionally, cytochrome P450 monooxygenase; part of the gene clusters that mediates the biosynthesis of lolitrems, indole-diterpene mycotoxins that are potent tremorgens in mammals, and are synthesized by clavicipitaceous fungal endophytes in association with their grass hosts. The geranylgeranyl diphosphate (GGPP) synthase ltmG is proposed to catalyze the first step in lolitrem biosynthesis. LtmG catalyzes a series of iterative condensations of isopentenyl diphosphate (IPP) with dimethylallyl diphosphate (DMAPP), geranyl diphosphate (GPP), and farnesyl diphosphate (FPP), to form GGPP. GGPP then condenses with indole-3-glycerol phosphate to form 3-geranylgeranylindole, an acyclic intermediate, to be incorporated into paxilline. Either ltmG or ltmC could be responsible for this step, as both are putative prenyl transferases. The FAD-dependent monooxygenase ltmM then catalyzes the epoxidation of the two terminal alkenes of the geranylgeranyl moiety, which is subsequently cyclized by ltmB, to paspaline. The cytochrome P450 monooxygenases ltmQ and ltmP can sequentially oxidize paspaline to terpendole E and terpendole F. Alternatively, ltmP converts paspaline to an intermediate which is oxidized by ltmQ to terpendole F. LtmF, ltmK, ltmE and ltmJ appear to be unique to the epichloe endophytes. The prenyltransferase ltmF is involved in the 27-hydroxyl-O-prenylation. The cytochrome P450 monooxygenase ltmK is required for the oxidative acetal ring formation. The multi-functional prenyltransferase ltmE is required for C20- and C21-prenylations of the indole ring of paspalanes and acts together with the cytochrome P450 monooxygenase ltmJ to yield lolitremanes by multiple oxidations and ring closures. The stereoisomer pairs of lolitriol and lolitrem N or lolitrem B and lolitrem F may be attributed to variations in the way in which ring closure can occur under the action of ltmJ. While the major product of this pathway is lolitrem B, the prenyl transferases and cytochrome P450 monooxygenases identified in this pathway have a remarkable versatility in their regio- and stereo-specificities to generate a diverse range of metabolites that are products of a metabolic grid rather than a linear pathway. The sequence is that of Cytochrome P450 monooxygenase ltmP from Epichloe festucae var. lolii (Neotyphodium lolii).